The following is a 448-amino-acid chain: Clusterin (448 aa).

Positions 1–21 (MKILLLCVALLLIWDNGMVLG) are cleaved as a signal peptide. The short motif at 77-80 (KKKK) is the Nuclear localization signal element. 5 disulfide bridges follow: Cys-101/Cys-312, Cys-112/Cys-304, Cys-115/Cys-301, Cys-120/Cys-294, and Cys-128/Cys-284. The N-linked (GlcNAc...) asparagine glycan is linked to Asn-102. Position 132 is a phosphoserine (Ser-132). Residues Asn-144, Asn-290, Asn-327, Asn-353, and Asn-373 are each glycosylated (N-linked (GlcNAc...) asparagine). Ser-395 bears the Phosphoserine mark. Positions 442–446 (RRKSR) match the Nuclear localization signal motif.

The protein belongs to the clusterin family. In terms of assembly, antiparallel disulfide-linked heterodimer of an alpha chain and a beta chain. Self-associates and forms higher oligomers. Interacts with a broad range of misfolded proteins, including APP, APOC2 and LYZ. Slightly acidic pH promotes interaction with misfolded proteins. Forms high-molecular weight oligomers upon interaction with misfolded proteins. Interacts with APOA1, LRP2, CLUAP1 and PON1. Interacts with the complement membrane attack complex. Interacts (via alpha chain) with XRCC6. Interacts with SYVN1, COMMD1, BTRC, CUL1 and with ubiquitin and SCF (SKP1-CUL1-F-box protein) E3 ubiquitin-protein ligase complexes. Interacts (via alpha chain) with BAX in stressed cells, where BAX undergoes a conformation change leading to association with the mitochondrial membrane. Does not interact with BAX in unstressed cells. Found in a complex with LTF, CLU, EPPIN and SEMG1. Interacts (immaturely glycosylated pre-secreted form) with HSPA5; this interaction promotes CLU stability and facilitates stress-induced CLU retrotranslocation from the secretory pathway to the mitochondria, thereby reducing stress-induced apoptosis by stabilizing mitochondrial membrane integrity. Interacts with BCL2L1; this interaction releases and activates BAX and promotes cell death. Interacts with TGFBR2 and ACVR1. Interacts (secreted form) with STMN3; this interaction may act as an important modulator during neuronal differentiation. Interacts with VLDLR and LRP8. Post-translationally, proteolytically cleaved on its way through the secretory system, probably within the Golgi lumen. Proteolytic cleavage is not necessary for its chaperone activity. All non-secreted forms are not proteolytically cleaved. Chaperone activity of uncleaved forms is dependent on a non-reducing environment. Polyubiquitinated, leading to proteasomal degradation. Under cellular stress, the intracellular level of cleaved form is reduced due to proteasomal degradation. In terms of processing, extensively glycosylated with sulfated N-linked carbohydrates. About 30% of the protein mass is comprised of complex N-linked carbohydrate. Endoplasmic reticulum (ER) stress induces changes in glycosylation status and increases level of hypoglycosylated forms. Core carbohydrates are essential for chaperone activity. Non-secreted forms are hypoglycosylated or unglycosylated. Most abundant in stomach, liver, brain, and testis, with intermediate levels in heart, ovary and kidney.

Its subcellular location is the secreted. It is found in the nucleus. The protein resides in the cytoplasm. The protein localises to the mitochondrion membrane. It localises to the cytosol. Its subcellular location is the microsome. It is found in the endoplasmic reticulum. The protein resides in the mitochondrion. The protein localises to the perinuclear region. It localises to the cytoplasmic vesicle. Its subcellular location is the secretory vesicle. It is found in the chromaffin granule. Functionally, functions as extracellular chaperone that prevents aggregation of non native proteins. Prevents stress-induced aggregation of blood plasma proteins. Inhibits formation of amyloid fibrils by APP, APOC2, B2M, CALCA, CSN3, SNCA and aggregation-prone LYZ variants (in vitro). Does not require ATP. Maintains partially unfolded proteins in a state appropriate for subsequent refolding by other chaperones, such as HSPA8/HSC70. Does not refold proteins by itself. Binding to cell surface receptors triggers internalization of the chaperone-client complex and subsequent lysosomal or proteasomal degradation. When secreted, protects cells against apoptosis and against cytolysis by complement: inhibits assembly of the complement membrane attack complex (MAC) by preventing polymerization of C9 pore component of the MAC complex. Intracellular forms interact with ubiquitin and SCF (SKP1-CUL1-F-box protein) E3 ubiquitin-protein ligase complexes and promote the ubiquitination and subsequent proteasomal degradation of target proteins. Promotes proteasomal degradation of COMMD1 and IKBKB. Modulates NF-kappa-B transcriptional activity. Following stress, promotes apoptosis. Inhibits apoptosis when associated with the mitochondrial membrane by interference with BAX-dependent release of cytochrome c into the cytoplasm. Plays a role in the regulation of cell proliferation. Following ER stress, suppresses stress-induced apoptosis by stabilizing mitochondrial membrane integrity through interaction with HSPA5. When secreted, does not affect caspase or BAX-mediated intrinsic apoptosis and TNF-induced NF-kappa-B-activity. When secreted, acts as an important modulator during neuronal differentiation through interaction with STMN3. Plays a role in the clearance of immune complexes that arise during cell injury. The polypeptide is Clusterin (Mus musculus (Mouse)).